The sequence spans 237 residues: Purine nucleoside phosphorylase DeoD-type (237 aa).

Residue H4 coordinates a purine D-ribonucleoside. Residues G20, R24, R43, and 87-90 (RVGT) each bind phosphate. A purine D-ribonucleoside-binding positions include 180–182 (EME) and 204–205 (SD). D205 serves as the catalytic Proton donor.

This sequence belongs to the PNP/UDP phosphorylase family. Homohexamer; trimer of homodimers.

It carries out the reaction a purine D-ribonucleoside + phosphate = a purine nucleobase + alpha-D-ribose 1-phosphate. The catalysed reaction is a purine 2'-deoxy-D-ribonucleoside + phosphate = a purine nucleobase + 2-deoxy-alpha-D-ribose 1-phosphate. Its function is as follows. Catalyzes the reversible phosphorolytic breakdown of the N-glycosidic bond in the beta-(deoxy)ribonucleoside molecules, with the formation of the corresponding free purine bases and pentose-1-phosphate. The polypeptide is Purine nucleoside phosphorylase DeoD-type (Streptococcus suis (strain 98HAH33)).